Here is a 96-residue protein sequence, read N- to C-terminus: Putative membrane protein insertion efficiency factor (96 aa).

Belongs to the UPF0161 family.

It localises to the cell inner membrane. In terms of biological role, could be involved in insertion of integral membrane proteins into the membrane. The polypeptide is Putative membrane protein insertion efficiency factor (Borreliella afzelii (strain PKo) (Borrelia afzelii)).